We begin with the raw amino-acid sequence, 359 residues long: Phospho-N-acetylmuramoyl-pentapeptide-transferase (359 aa).

10 helical membrane passes run 3–23 (QILI…PALI), 55–75 (VAII…GLAF), 80–100 (ISAS…VGFL), 117–137 (TAKT…ALGF), 156–176 (IATV…VVSA), 187–207 (LDGL…LITF), 231–251 (LAIV…WNAA), 255–275 (IFMG…ISVT), 280–300 (ILAV…VLQI), and 334–354 (FWLL…GEWL).

Belongs to the glycosyltransferase 4 family. MraY subfamily. Requires Mg(2+) as cofactor.

The protein resides in the cell membrane. It carries out the reaction UDP-N-acetyl-alpha-D-muramoyl-L-alanyl-gamma-D-glutamyl-meso-2,6-diaminopimeloyl-D-alanyl-D-alanine + di-trans,octa-cis-undecaprenyl phosphate = di-trans,octa-cis-undecaprenyl diphospho-N-acetyl-alpha-D-muramoyl-L-alanyl-D-glutamyl-meso-2,6-diaminopimeloyl-D-alanyl-D-alanine + UMP. Its pathway is cell wall biogenesis; peptidoglycan biosynthesis. Its function is as follows. Catalyzes the initial step of the lipid cycle reactions in the biosynthesis of the cell wall peptidoglycan: transfers peptidoglycan precursor phospho-MurNAc-pentapeptide from UDP-MurNAc-pentapeptide onto the lipid carrier undecaprenyl phosphate, yielding undecaprenyl-pyrophosphoryl-MurNAc-pentapeptide, known as lipid I. This is Phospho-N-acetylmuramoyl-pentapeptide-transferase from Mycolicibacterium paratuberculosis (strain ATCC BAA-968 / K-10) (Mycobacterium paratuberculosis).